We begin with the raw amino-acid sequence, 143 residues long: Putative transmembrane protein ORF32 (143 aa).

Helical transmembrane passes span 20–42 (GISG…SFTL) and 52–74 (WPLI…EGGV).

The protein resides in the host membrane. The polypeptide is Putative transmembrane protein ORF32 (Haloarcula hispanica (His1V)).